A 655-amino-acid chain; its full sequence is A-type voltage-gated potassium channel KCND3 (655 aa).

At 1 to 182 (MAAGVAAWLP…FENPHTSTLA (182 aa)) the chain is on the cytoplasmic side. The segment at 6 to 21 (AAWLPFARAAAIGWMP) is interaction with KCNIP1 and KCNIP2. Residues 70–78 (EKEFFFNED) form an interaction with KCNIP1 region. 4 residues coordinate Zn(2+): H104, C110, C131, and C132. At S153 the chain carries Phosphoserine. The helical transmembrane segment at 183 to 204 (LVFYYVTGFFIAVSVITNVVET) threads the bilayer. Topologically, residues 205–223 (VPCGTVPGSKELPCGERYS) are extracellular. A helical membrane pass occupies residues 224 to 246 (VAFFCLDTACVMIFTVEYLLRLF). Residues 247 to 253 (AAPSRYR) are Cytoplasmic-facing. A helical membrane pass occupies residues 254–277 (FIRSVMSIIDVVAIMPYYIGLVMT). Topologically, residues 278 to 283 (NNEDVS) are extracellular. Residues 284-306 (GAFVTLRVFRVFRIFKFSRHSQG) traverse the membrane as a helical; Voltage-sensor segment. Residues 307 to 318 (LRILGYTLKSCA) lie on the Cytoplasmic side of the membrane. Residues 319-343 (SELGFLLFSLTMAIIIFATVMFYAE) traverse the membrane as a helical segment. Residues 344–352 (KGSSASKFT) are Extracellular-facing. Residues 353-366 (SIPASFWYTIVTMT) constitute an intramembrane region (helical). T367, L368, G369, and Y370 together coordinate K(+). The Selectivity filter motif lies at 367-372 (TLGYGD). The stretch at 367–374 (TLGYGDMV) is an intramembrane region. A helical membrane pass occupies residues 378–400 (IAGKIFGSICSLSGVLVIALPVP). Residues 401 to 655 (VIVSNFSRIY…ASNVVKVSAL (255 aa)) lie on the Cytoplasmic side of the membrane. T459 is modified (phosphothreonine). Residues 470–487 (SLIESQHHHLLHCLEKTT) are interaction with KCNIP1 and KCNIP2. Residues 472-487 (IESQHHHLLHCLEKTT) form a mediates dendritic targeting region. Residues 525–548 (MQNYPSTRSPSLSSHPGLTTTCCS) show a composition bias toward polar residues. Positions 525 to 565 (MQNYPSTRSPSLSSHPGLTTTCCSRRSKKTTHLPNSNLPAT) are disordered. S569 is subject to Phosphoserine; by CaMK2D. S585 is subject to Phosphoserine. Positions 615-655 (ISIPTPPALTPEGESRPPPASPGPNTNIPSIASNVVKVSAL) are disordered. Over residues 637–647 (GPNTNIPSIAS) the composition is skewed to polar residues.

Belongs to the potassium channel family. D (Shal) (TC 1.A.1.2) subfamily. Kv4.3/KCND3 sub-subfamily. In terms of assembly, homotetramer. Heterotetramer with KCND2. Associates with the regulatory subunits KCNIP3 and KCNIP4. Interacts with KCNE1, KCNE2, SCN1B and KCNAB1 and DLG1. Component of heteromultimeric potassium channels. Identified in potassium channel complexes containing KCND1, KCND2, KCND3, KCNIP1, KCNIP2, KCNIP3, KCNIP4, DPP6 and DPP10. Interacts with KCNIP1; each KCNIP1 monomer interacts with two adjacent KCND3 subunits, through both the N-terminal inactivation ball of a KCND3 subunit and a C-terminal helix from the adjacent KCND3 subunit, clamping them together; this interaction stabilizes the tetrameric form and modulates the channel gating kinetics namely channel activation and inactivation kinetics and rate of recovery from inactivation. Interacts with DPP6; this interaction modulates the channel gating kinetics namely channel activation and inactivation kinetics and rate of recovery from inactivation. Interacts with KCNIP2; each KCNIP2 monomer interacts with two adjacent KCND3 subunits, through both the N-terminal inactivation ball of a KCND3 subunit and a C-terminal helix from the adjacent KCND3 subunit, clamping them together; this interaction modulates the channel gating kinetics. Regulated through phosphorylation at Ser-569 by CaMK2D. As to expression, highly expressed in heart and brain, in particular in cortex, cerebellum, amygdala and caudate nucleus. Detected at lower levels in liver, skeletal muscle, kidney and pancreas.

Its subcellular location is the cell membrane. It localises to the sarcolemma. The protein localises to the cell projection. The protein resides in the dendrite. It catalyses the reaction K(+)(in) = K(+)(out). Functionally, pore-forming (alpha) subunit of voltage-gated A-type potassium channels that mediates transmembrane potassium transport in excitable membranes, in brain and heart. In cardiomyocytes, may generate the transient outward potassium current I(To). In neurons, may conduct the transient subthreshold somatodendritic A-type potassium current (ISA). Kinetics properties are characterized by fast activation at subthreshold membrane potentials, rapid inactivation, and quick recovery from inactivation. Channel properties are modulated by interactions with regulatory subunits. Interaction with the regulatory subunits KCNIP1 or KCNIP2 modulates the channel gating kinetics namely channel activation and inactivation kinetics and rate of recovery from inactivation. Likewise, interaction with DPP6 modulates the channel gating kinetics namely channel activation and inactivation kinetics. The chain is A-type voltage-gated potassium channel KCND3 (KCND3) from Homo sapiens (Human).